The following is a 273-amino-acid chain: Phosphate import ATP-binding protein PstB 1 (273 aa).

The ABC transporter domain maps to 27 to 268; it reads ISIEHLSLYY…PLKKQTEDYI (242 aa). ATP is bound at residue 59 to 66; sequence GPSGCGKS.

This sequence belongs to the ABC transporter superfamily. Phosphate importer (TC 3.A.1.7) family. As to quaternary structure, the complex is composed of two ATP-binding proteins (PstB), two transmembrane proteins (PstC and PstA) and a solute-binding protein (PstS).

Its subcellular location is the cell inner membrane. The enzyme catalyses phosphate(out) + ATP + H2O = ADP + 2 phosphate(in) + H(+). Functionally, part of the ABC transporter complex PstSACB involved in phosphate import. Responsible for energy coupling to the transport system. The protein is Phosphate import ATP-binding protein PstB 1 of Vibrio cholerae serotype O1 (strain ATCC 39315 / El Tor Inaba N16961).